An 852-amino-acid chain; its full sequence is Alanine--tRNA ligase (852 aa).

Positions 554, 558, 656, and 660 each coordinate Zn(2+).

The protein belongs to the class-II aminoacyl-tRNA synthetase family. Zn(2+) serves as cofactor.

The protein resides in the cytoplasm. The catalysed reaction is tRNA(Ala) + L-alanine + ATP = L-alanyl-tRNA(Ala) + AMP + diphosphate. In terms of biological role, catalyzes the attachment of alanine to tRNA(Ala) in a two-step reaction: alanine is first activated by ATP to form Ala-AMP and then transferred to the acceptor end of tRNA(Ala). Also edits incorrectly charged Ser-tRNA(Ala) and Gly-tRNA(Ala) via its editing domain. This is Alanine--tRNA ligase from Campylobacter concisus (strain 13826).